The following is a 359-amino-acid chain: Peptide chain release factor 1 (359 aa).

Residue Gln236 is modified to N5-methylglutamine.

This sequence belongs to the prokaryotic/mitochondrial release factor family. Methylated by PrmC. Methylation increases the termination efficiency of RF1.

The protein localises to the cytoplasm. Peptide chain release factor 1 directs the termination of translation in response to the peptide chain termination codons UAG and UAA. This is Peptide chain release factor 1 (prfA) from Mycoplasma genitalium (strain ATCC 33530 / DSM 19775 / NCTC 10195 / G37) (Mycoplasmoides genitalium).